The chain runs to 278 residues: Undecaprenyl-diphosphatase (278 aa).

6 consecutive transmembrane segments (helical) span residues 49–69 (ANTF…VVFW), 97–117 (HVLI…DFID), 120–140 (LFSI…MIAA), 197–217 (ADFT…LSLV), 226–246 (GDLG…LLSI), and 258–278 (LVPF…IVYM).

It belongs to the UppP family.

It localises to the cell membrane. The enzyme catalyses di-trans,octa-cis-undecaprenyl diphosphate + H2O = di-trans,octa-cis-undecaprenyl phosphate + phosphate + H(+). Catalyzes the dephosphorylation of undecaprenyl diphosphate (UPP). Confers resistance to bacitracin. This is Undecaprenyl-diphosphatase from Exiguobacterium sibiricum (strain DSM 17290 / CCUG 55495 / CIP 109462 / JCM 13490 / 255-15).